We begin with the raw amino-acid sequence, 470 residues long: 6-phosphofructo-2-kinase/fructose-2,6-bisphosphatase (470 aa).

The 6-phosphofructo-2-kinase stretch occupies residues 1–249 (MADRLRELTQ…VYYLMNIHVT (249 aa)). Ser31 bears the Phosphoserine; by PKA mark. 47–55 (GLPARGKTY) contributes to the ATP binding site. Arg80 and Arg104 together coordinate beta-D-fructose 6-phosphate. The active site involves Asp130. Residues Thr132 and Arg138 each coordinate beta-D-fructose 6-phosphate. Cys160 is an active-site residue. 169–174 (NITQVK) provides a ligand contact to ATP. Positions 174, 195, and 199 each coordinate beta-D-fructose 6-phosphate. The segment at 250 to 470 (PRSIYLSRHG…EALDTVPEHF (221 aa)) is fructose-2,6-bisphosphatase. Arg257 contacts beta-D-fructose 2,6-bisphosphate. Catalysis depends on His258, which acts as the Tele-phosphohistidine intermediate. Beta-D-fructose 2,6-bisphosphate-binding residues include Asn264 and Gly270. Glu327 (proton donor/acceptor) is an active-site residue. 6 residues coordinate beta-D-fructose 2,6-bisphosphate: Tyr338, Arg352, Lys356, Tyr367, Gln393, and Arg397. Residue 349–352 (FALR) participates in ATP binding. ATP contacts are provided by residues 393–397 (QAVMR) and Tyr429.

It in the C-terminal section; belongs to the phosphoglycerate mutase family. As to quaternary structure, homodimer.

The enzyme catalyses beta-D-fructose 2,6-bisphosphate + H2O = beta-D-fructose 6-phosphate + phosphate. The catalysed reaction is beta-D-fructose 6-phosphate + ATP = beta-D-fructose 2,6-bisphosphate + ADP + H(+). Phosphorylation results in inhibition of the kinase activity. In terms of biological role, synthesis and degradation of fructose 2,6-bisphosphate. This is 6-phosphofructo-2-kinase/fructose-2,6-bisphosphatase from Aquarana catesbeiana (American bullfrog).